Here is a 228-residue protein sequence, read N- to C-terminus: DOPA 4,5-dioxygenase (228 aa).

In terms of assembly, homodimer. In terms of tissue distribution, expressed at high level in coloured cap tissue and at least 10 times lower level in the stipe.

It is found in the cytoplasm. The protein operates within pigment biosynthesis; betalain biosynthesis. In terms of biological role, extradiol dioxygenase that opens up the cyclic ring of DOPA between carbons 4 and 5 thus producing an unstable seco-DOPA that rearranges non-enzymatically to betalamic acid. Can also catalyze the formation of muscaflavin (a pigment found in the hygrocybe mushrooms family and of some amanita species only) by a 2,3-extradiol cleavage of DOPA. The polypeptide is DOPA 4,5-dioxygenase (DODA) (Amanita muscaria (Fly agaric)).